The chain runs to 671 residues: MIERIADRKFDLVSPYQPAGDQPQAIAKLTKGFEEGKKEQILLGATGTGKTFTMSNIIANLNKPTLILSHNKTLAGQLYGEFKEFFPHNAVEYFVSYYDYYQPEAYVPSTDTYIEKDSAINDEIDKLRHSATSALLERNDVIVVASVSSIFGLGDPHEYKNHVLSLRTGMTIDRNTLLRQLVDIQFDRNDIDFQRGRFRVRGDVVEIFPASRDDHAIRVEFFGDEIDRITEVDALTGEVIGTRDHVAIFPATHFMTSDEQMQRAIKSIAAELEAQLKVLRSENKLLEAQRLEQRTNYDIEMMREMGFTSGIENYSRHMDGRKPGEPPYTLLDFFPKDFNIMVDESHVTMPQIRGMYNGDRARKQMLVNYGFRLPSALDNRPLKINEFEQHVHRILYVSATPGPYELDRVPKDDIAEQIIRPTGLLDPKIEVRPVMGQIDDLVGEINKRVDAHERVFITTLTKKMAEDLTDYLKDMGIKVRYLHSDIKTLERTQIIRDLRLGKFDVLIGINLLREGIDVPEVSLIAILDADKEGFLRAERSLIQTIGRASRNEHGKVIMYADKVTDSMKAAIDETQRRRTIQEKFNEEHHITPKTIIKPIRAAISSYEQSDDDKAEAKKTFAEVDYEDMSKADKKELVANLRSQMQAAAKKLDFEQAASLRDTILELQADMS.

Residues 31-189 enclose the Helicase ATP-binding domain; sequence KGFEEGKKEQ…QLVDIQFDRN (159 aa). Position 44–51 (44–51) interacts with ATP; the sequence is GATGTGKT. The Beta-hairpin motif lies at 97–120; the sequence is YYDYYQPEAYVPSTDTYIEKDSAI. A Helicase C-terminal domain is found at 437 to 599; the sequence is QIDDLVGEIN…ITPKTIIKPI (163 aa). In terms of domain architecture, UVR spans 634–669; it reads KELVANLRSQMQAAAKKLDFEQAASLRDTILELQAD.

This sequence belongs to the UvrB family. As to quaternary structure, forms a heterotetramer with UvrA during the search for lesions. Interacts with UvrC in an incision complex.

It is found in the cytoplasm. Functionally, the UvrABC repair system catalyzes the recognition and processing of DNA lesions. A damage recognition complex composed of 2 UvrA and 2 UvrB subunits scans DNA for abnormalities. Upon binding of the UvrA(2)B(2) complex to a putative damaged site, the DNA wraps around one UvrB monomer. DNA wrap is dependent on ATP binding by UvrB and probably causes local melting of the DNA helix, facilitating insertion of UvrB beta-hairpin between the DNA strands. Then UvrB probes one DNA strand for the presence of a lesion. If a lesion is found the UvrA subunits dissociate and the UvrB-DNA preincision complex is formed. This complex is subsequently bound by UvrC and the second UvrB is released. If no lesion is found, the DNA wraps around the other UvrB subunit that will check the other stand for damage. This Lacticaseibacillus casei (strain BL23) (Lactobacillus casei) protein is UvrABC system protein B.